Consider the following 204-residue polypeptide: Methylthioribulose-1-phosphate dehydratase (204 aa).

The Zn(2+) site is built by His-96 and His-98.

This sequence belongs to the aldolase class II family. MtnB subfamily. Zn(2+) serves as cofactor.

It carries out the reaction 5-(methylsulfanyl)-D-ribulose 1-phosphate = 5-methylsulfanyl-2,3-dioxopentyl phosphate + H2O. It functions in the pathway amino-acid biosynthesis; L-methionine biosynthesis via salvage pathway; L-methionine from S-methyl-5-thio-alpha-D-ribose 1-phosphate: step 2/6. In terms of biological role, catalyzes the dehydration of methylthioribulose-1-phosphate (MTRu-1-P) into 2,3-diketo-5-methylthiopentyl-1-phosphate (DK-MTP-1-P). The protein is Methylthioribulose-1-phosphate dehydratase of Methylococcus capsulatus (strain ATCC 33009 / NCIMB 11132 / Bath).